The following is a 560-amino-acid chain: Nuclear receptor subfamily 5 group A member 2 (560 aa).

The tract at residues 17–54 (GLPAIAPAPGSETPHSPKLEEKHREKRAGLPDRHRRPI) is disordered. The segment covering 31-48 (HSPKLEEKHREKRAGLPD) has biased composition (basic and acidic residues). The segment at residues 104-179 (EELCPVCGDK…VGMKLEAVRA (76 aa)) is a DNA-binding region (nuclear receptor). Residues C107, C110, C124, C127, C143, C149, C159, and C162 each coordinate Zn(2+). NR C4-type zinc fingers lie at residues 107–127 (CPVC…CESC) and 143–162 (CIEN…CPYC). Positions 173-188 (KLEAVRADRMRGGRNK) are C-terminal extension (CTE). Positions 189–208 (FGPMYKRDRALKQQKKALIR) match the FTZ-F1 box motif. A Glycyl lysine isopeptide (Lys-Gly) (interchain with G-Cter in SUMO1) cross-link involves residue K289. In terms of domain architecture, NR LBD spans 319–558 (SIPHLILELL…NLLIEMLHAK (240 aa)). A phospholipid derivative is bound by residues Y535 and K539. An AF-2 region spans residues 547-558 (YNNLLIEMLHAK).

Belongs to the nuclear hormone receptor family. NR5 subfamily. In terms of assembly, monomer; Binds DNA as a monomer. Interacts with nuclear receptor corepressors NR0B1 and NR0B2; repressing NR5A2 nuclear receptor activity. Interacts with nuclear receptor coactivators CTNNB1, PPARGC1A and NCOA2; interaction takes place following ligand-binding and promotes target gene activation. Interacts (when sumoylated) with GPS2; interaction with GPS2 onto hepatic acute phase protein promoters prevents N-Cor corepressor complex dissociation. Interacts with HNF1A. Interacts with GRIP1. Post-translationally, sumoylated by SUMO1 at Lys-289 during the hepatic acute phase response, leading to promote interaction with GPS2 and prevent N-Cor corepressor complex dissociation.

It localises to the nucleus. Its subcellular location is the chromosome. Its function is as follows. Orphan nuclear receptor that binds DNA as a monomer to the 5'-TCAAGGCCA-3' sequence and controls expression of target genes: regulates key biological processes, such as early embryonic development, cholesterol and bile acid synthesis pathways, as well as liver and pancreas morphogenesis. Ligand-binding causes conformational change which causes recruitment of coactivators, promoting target gene activation. The specific ligand is unknown, but specific phospholipids, such as phosphatidylethanolamine, phosphatidylserine, dilauroyl phosphatidylcholine and diundecanoyl phosphatidylcholine can act as ligand in vitro. Acts as a pioneer transcription factor, which unwraps target DNA from histones and elicits local opening of closed chromatin. Plays a central role during preimplantation stages of embryonic development. Plays a minor role in zygotic genome activation (ZGA) by regulating a small set of two-cell stage genes. Plays a major role in morula development (2-16 cells embryos) by acting as a master regulator at the 8-cell stage, controlling expression of lineage-specifying transcription factors and genes involved in mitosis, telomere maintenance and DNA repair. Zygotic NR5A2 binds to both closed and open chromatin with other transcription factors, often at SINE B1/Alu repeats DNA elements, promoting chromatin accessibility at nearby regulatory regions. Also involved in the epiblast stage of development and embryonic stem cell pluripotency, by promoting expression of POU5F1/OCT4. Regulates other processes later in development, such as formation of connective tissue in lower jaw and middle ear, neural stem cell differentiation, ovarian follicle development and Sertoli cell differentiation. Involved in exocrine pancreas development and acinar cell differentiation. Acts as an essential transcriptional regulator of lipid metabolism. Key regulator of cholesterol 7-alpha-hydroxylase gene (CYP7A) expression in liver. Also acts as a negative regulator of inflammation in different organs, such as, liver and pancreas. Protects against intestinal inflammation via its ability to regulate glucocorticoid production. Plays an anti-inflammatory role during the hepatic acute phase response by acting as a corepressor: inhibits the hepatic acute phase response by preventing dissociation of the N-Cor corepressor complex. Acts as a regulator of immunity by promoting lymphocyte T-cell development, proliferation and effector functions. Also involved in resolution of endoplasmic reticulum stress in the liver. The sequence is that of Nuclear receptor subfamily 5 group A member 2 from Rattus norvegicus (Rat).